The primary structure comprises 494 residues: MRRVALSVLFQSSRVLHFTDLRDKQIALCNAAPGHTVQFHQHRRHSSAPVSSVGGQNTFSCLGASCAGLLHPSRVRFANRRRSGSTSKKAQVKSSVNQLAIPSAATRERRKPKLSNSCAPAVESQKVGVAPTTSRASGETRTSCAPPPASRMKPSFYVVAVGRQRGIYSTWDQCSEQVKGFSGAVYKSFRTLSEARAYLTAHPARSGLEKSDRGDGAASLSALSEPQVGLRRSRAAEAEASYVVEAPAQPTLRQRVEEEVPSGAAAVQRAESSVPQVVYVDGACSHNGTPKARAGYGGFYGSTSDSRNFSLPVPITEAQTNNRGEMRAVIHCIVQGFVDAGVPPAALGTSHCVEPDWELSELPQPLRRLVIYTDSRYVIDGLTRYALKWVANGFKLASKEPVLNQDLWRQLIRLRDAYNTRYAEQQHWAAATCSHASTRVPAASQSKRFHTHNTRNDETEGIELRHVKGHSNDYGNEMADVLAVAGARMHGTSE.

2 disordered regions span residues 79-148 (NRRR…APPP) and 205-231 (RSGL…VGLR). Polar residues-rich tracts occupy residues 84-100 (GSTS…NQLA) and 131-143 (PTTS…TRTS). The RNase H type-1 domain maps to 272–488 (SSVPQVVYVD…ADVLAVAGAR (217 aa)). Aspartate 281, glutamate 325, aspartate 374, and aspartate 480 together coordinate Mg(2+).

This sequence belongs to the RNase H family. As to quaternary structure, monomer. Requires Mg(2+) as cofactor.

The catalysed reaction is Endonucleolytic cleavage to 5'-phosphomonoester.. Functionally, endonuclease that specifically degrades the RNA of RNA-DNA hybrids. This is Ribonuclease H (RNH1) from Crithidia fasciculata.